A 205-amino-acid polypeptide reads, in one-letter code: Large ribosomal subunit protein uL3 (205 aa).

Residues 126-150 (GGPKTHGQSDRHRAPGSISSTTTPG) form a disordered region.

This sequence belongs to the universal ribosomal protein uL3 family. Part of the 50S ribosomal subunit. Forms a cluster with proteins L14 and L19.

One of the primary rRNA binding proteins, it binds directly near the 3'-end of the 23S rRNA, where it nucleates assembly of the 50S subunit. In Dehalococcoides mccartyi (strain ATCC BAA-2266 / KCTC 15142 / 195) (Dehalococcoides ethenogenes (strain 195)), this protein is Large ribosomal subunit protein uL3.